A 764-amino-acid polypeptide reads, in one-letter code: Zygote defective protein 12 (764 aa).

The segment covering 1-20 (MLDLTNQESDSSENGNSKYA) has biased composition (polar residues). The disordered stretch occupies residues 1–33 (MLDLTNQESDSSENGNSKYADSTDGRGIGTSRR). Positions 1-236 (MLDLTNQESD…ESSVITNGNG (236 aa)) are interaction with dli-1. A Calponin-homology (CH) domain is found at 43–169 (RKDLADLVFW…VSLAFIGKTQ (127 aa)). Coiled coils occupy residues 244 to 405 (LSAN…HVKT) and 436 to 692 (GLES…NRLI). The chain crosses the membrane as a helical span at residues 732-752 (ALPWRFGISSMLIIFMVWFFI).

Belongs to the hook family. In terms of assembly, homodimer. Interacts with the dynein subunit dli-1 via its N-terminus. May interact with microtubules.

The protein resides in the nucleus membrane. The protein localises to the cytoplasm. It is found in the cytoskeleton. Its subcellular location is the microtubule organizing center. It localises to the centrosome. Its function is as follows. Cytoskeletal linker protein, which is essential for attachment of the centrosome to the nucleus. Required for dynein localization to the nuclear envelope. This is Zygote defective protein 12 (zyg-12) from Caenorhabditis briggsae.